A 409-amino-acid chain; its full sequence is Outer membrane protein assembly factor BamB (409 aa).

The N-terminal stretch at 1–34 (MAGNILLLILDYVFHAGSRTLRVCILSLLILLSG) is a signal peptide. C35 carries N-palmitoyl cysteine lipidation. C35 carries the S-diacylglycerol cysteine lipid modification.

Belongs to the BamB family. In terms of assembly, part of the Bam complex.

It localises to the cell outer membrane. In terms of biological role, part of the outer membrane protein assembly complex, which is involved in assembly and insertion of beta-barrel proteins into the outer membrane. The sequence is that of Outer membrane protein assembly factor BamB from Nitrosomonas eutropha (strain DSM 101675 / C91 / Nm57).